Consider the following 820-residue polypeptide: Probable ATP-dependent RNA helicase DDX23 (820 aa).

Residues 1 to 42 (MAGELADKKDRDASPSKEERKRSRTPDRERDRDRDRKSSPSK) show a composition bias toward basic and acidic residues. The interval 1–244 (MAGELADKKD…QKIREEKDKS (244 aa)) is disordered. A phosphoserine mark is found at S14 and S16. Residues 43–65 (DRKRHRSRDRRRGGSRSRSRSRS) show a composition bias toward basic residues. Residues 66–105 (KSAERERRHKERERDKERDRNKKDRDRDKDGHRRDKDRKR) show a composition bias toward basic and acidic residues. Phosphoserine is present on residues S107 and S109. 3 stretches are compositionally biased toward basic and acidic residues: residues 112 to 137 (RGKD…DKKP), 147 to 226 (LLAK…RETN), and 233 to 244 (GRQKIREEKDKS). A Q motif motif is present at residues 391–419 (RSWKDSSLPPHILEVIDKCGYKEPTPIQR). Positions 422-627 (IPIGLQNRDI…RSYLRRPAVV (206 aa)) constitute a Helicase ATP-binding domain. 435 to 442 (AETGSGKT) contributes to the ATP binding site. The DEAD box motif lies at 549–552 (DEAD). In terms of domain architecture, Helicase C-terminal spans 651–799 (KRKKLLAILE…SCPPELANHP (149 aa)). Glycyl lysine isopeptide (Lys-Gly) (interchain with G-Cter in SUMO2) cross-links involve residues K686 and K811.

The protein belongs to the DEAD box helicase family. DDX23/PRP28 subfamily. As to quaternary structure, the phosphorylated form (by SRPK2) is a component of the U4/U6-U5 tri-snRNP complex composed of the U4, U6 and U5 snRNAs and at least PRPF3, PRPF4, PRPF6, PRPF8, PRPF31, SNRNP200, TXNL4A, WDR57, SNRNP40, DDX23, CD2BP2, PPIH, SNU13, EFTUD2, SART1 and USP39. Identified in the spliceosome C complex. Interacts with ERBB4. Interacts with ERCC6. Post-translationally, in vitro phosphorylated by CLK1 and U1 snRNP-associated protein kinase. Phosphorylated by SRPK2 and this phosphorylation is required for its association with the tri-snRNP (U4/U6-U5 tri-small nuclear ribonucleoproteins) and subsequent spliceosomal B complex formation. May be phosphorylated by SRPK2 on Ser residues in the SR domain; the phosphorylation is required for the removal of inappropriate R-loops during transcription.

Its subcellular location is the nucleus. It localises to the chromosome. The catalysed reaction is ATP + H2O = ADP + phosphate + H(+). Involved in pre-mRNA splicing and its phosphorylated form (by SRPK2) is required for spliceosomal B complex formation. Independently of its spliceosome formation function, required for the suppression of incorrect R-loops formed during transcription; R-loops are composed of a DNA:RNA hybrid and the associated non-template single-stranded DNA. This Homo sapiens (Human) protein is Probable ATP-dependent RNA helicase DDX23.